The chain runs to 395 residues: Elongation factor Tu (395 aa).

The 195-residue stretch at lysine 10 to alanine 204 folds into the tr-type G domain. A G1 region spans residues glycine 19–threonine 26. Residue glycine 19 to threonine 26 coordinates GTP. Residue threonine 26 coordinates Mg(2+). The tract at residues glycine 60–asparagine 64 is G2. Positions aspartate 81 to glycine 84 are G3. GTP-binding positions include aspartate 81–histidine 85 and asparagine 136–aspartate 139. The tract at residues asparagine 136 to aspartate 139 is G4. Residues serine 174–leucine 176 are G5.

This sequence belongs to the TRAFAC class translation factor GTPase superfamily. Classic translation factor GTPase family. EF-Tu/EF-1A subfamily. As to quaternary structure, monomer.

It localises to the cytoplasm. The enzyme catalyses GTP + H2O = GDP + phosphate + H(+). GTP hydrolase that promotes the GTP-dependent binding of aminoacyl-tRNA to the A-site of ribosomes during protein biosynthesis. The chain is Elongation factor Tu from Leuconostoc mesenteroides subsp. mesenteroides (strain ATCC 8293 / DSM 20343 / BCRC 11652 / CCM 1803 / JCM 6124 / NCDO 523 / NBRC 100496 / NCIMB 8023 / NCTC 12954 / NRRL B-1118 / 37Y).